Here is a 90-residue protein sequence, read N- to C-terminus: DNA-directed RNA polymerase subunit omega (90 aa).

Belongs to the RNA polymerase subunit omega family. As to quaternary structure, the RNAP catalytic core consists of 2 alpha, 1 beta, 1 beta' and 1 omega subunit. When a sigma factor is associated with the core the holoenzyme is formed, which can initiate transcription.

The enzyme catalyses RNA(n) + a ribonucleoside 5'-triphosphate = RNA(n+1) + diphosphate. In terms of biological role, promotes RNA polymerase assembly. Latches the N- and C-terminal regions of the beta' subunit thereby facilitating its interaction with the beta and alpha subunits. The sequence is that of DNA-directed RNA polymerase subunit omega from Histophilus somni (strain 129Pt) (Haemophilus somnus).